Reading from the N-terminus, the 901-residue chain is Protein translocase subunit SecA (901 aa).

ATP-binding positions include Q87, 105–109 (GEGKT), and D512. Residues C885, C887, C896, and H897 each coordinate Zn(2+).

The protein belongs to the SecA family. Monomer and homodimer. Part of the essential Sec protein translocation apparatus which comprises SecA, SecYEG and auxiliary proteins SecDF-YajC and YidC. The cofactor is Zn(2+).

The protein resides in the cell inner membrane. The protein localises to the cytoplasm. It catalyses the reaction ATP + H2O + cellular proteinSide 1 = ADP + phosphate + cellular proteinSide 2.. In terms of biological role, part of the Sec protein translocase complex. Interacts with the SecYEG preprotein conducting channel. Has a central role in coupling the hydrolysis of ATP to the transfer of proteins into and across the cell membrane, serving both as a receptor for the preprotein-SecB complex and as an ATP-driven molecular motor driving the stepwise translocation of polypeptide chains across the membrane. The polypeptide is Protein translocase subunit SecA (Salmonella agona (strain SL483)).